The chain runs to 233 residues: Orotidine 5'-phosphate decarboxylase (233 aa).

Substrate is bound by residues Asp12, Lys34, 61–70, Thr120, Arg181, Gln190, Gly210, and Arg211; that span reads DLKFHDIPNT. Catalysis depends on Lys63, which acts as the Proton donor.

It belongs to the OMP decarboxylase family. Type 1 subfamily. In terms of assembly, homodimer.

It carries out the reaction orotidine 5'-phosphate + H(+) = UMP + CO2. It functions in the pathway pyrimidine metabolism; UMP biosynthesis via de novo pathway; UMP from orotate: step 2/2. Its function is as follows. Catalyzes the decarboxylation of orotidine 5'-monophosphate (OMP) to uridine 5'-monophosphate (UMP). This is Orotidine 5'-phosphate decarboxylase from Hahella chejuensis (strain KCTC 2396).